Consider the following 302-residue polypeptide: Ornithine carbamoyltransferase (302 aa).

Carbamoyl phosphate-binding positions include 47-50 (STRT), glutamine 74, arginine 98, and 125-128 (HPCQ). L-ornithine is bound by residues asparagine 156, aspartate 220, and 224–225 (SM). Residues 260-261 (CL) and arginine 288 each bind carbamoyl phosphate.

It belongs to the aspartate/ornithine carbamoyltransferase superfamily. OTCase family.

The protein resides in the cytoplasm. The catalysed reaction is carbamoyl phosphate + L-ornithine = L-citrulline + phosphate + H(+). The protein operates within amino-acid biosynthesis; L-arginine biosynthesis; L-arginine from L-ornithine and carbamoyl phosphate: step 1/3. Functionally, reversibly catalyzes the transfer of the carbamoyl group from carbamoyl phosphate (CP) to the N(epsilon) atom of ornithine (ORN) to produce L-citrulline. The protein is Ornithine carbamoyltransferase of Methanosphaera stadtmanae (strain ATCC 43021 / DSM 3091 / JCM 11832 / MCB-3).